Here is a 345-residue protein sequence, read N- to C-terminus: MREGGVMKKRLLALIVAFAVLTAGCLGSESKEVTLIVFHAGSLSVPFQEVEKEFSEYAERNLGIKVSFQDEASGSVMAVRKVTDLGRKADVIGVADYTLIPQLLIPNYTDFYVLFATNEIVIAFTDKSRYVEEMKSNPDKWYEILAREDVRFGFSDPNQDPCGYRSLMVIKLADLYYGKEIFKELIEENTNIYSNGTQIYAPKEITVNPGKIVIRPKETDLLGLVESGSIDYIFIYKSVAKQHNLSYITLPSEINLGDFSKEKFYGQISITLGSTGKTIKAKPIVYGVTVLKDAPNREVAIEFLRYLLSENGKRIFEKNHQDFLEPPIAFGNVPEELKPLVSIEK.

Positions 1 to 27 (MREGGVMKKRLLALIVAFAVLTAGCLG) are cleaved as a signal peptide. Molybdate is bound by residues 41 to 42 (GS), S75, 160 to 162 (DPC), E218, and Y236. Tungstate-binding positions include 41–42 (GS), S75, 160–162 (DPC), E218, and Y236.

This sequence belongs to the bacterial solute-binding protein 1 family. WtpA subfamily. In terms of assembly, monomer. The complex is composed of two ATP-binding proteins (WtpC), two transmembrane proteins (WtpB) and a solute-binding protein (WtpA).

It is found in the cell membrane. Part of the ABC transporter complex WtpABC involved in molybdate/tungstate import. Binds tungstate and molybdate, with a preference for tungstate. In Pyrococcus furiosus (strain ATCC 43587 / DSM 3638 / JCM 8422 / Vc1), this protein is Molybdate/tungstate-binding protein WtpA.